The following is a 283-amino-acid chain: Bifunctional protein FolD (283 aa).

Residues 164–166 (GRS), serine 189, and threonine 230 contribute to the NADP(+) site.

It belongs to the tetrahydrofolate dehydrogenase/cyclohydrolase family. As to quaternary structure, homodimer.

It catalyses the reaction (6R)-5,10-methylene-5,6,7,8-tetrahydrofolate + NADP(+) = (6R)-5,10-methenyltetrahydrofolate + NADPH. It carries out the reaction (6R)-5,10-methenyltetrahydrofolate + H2O = (6R)-10-formyltetrahydrofolate + H(+). Its pathway is one-carbon metabolism; tetrahydrofolate interconversion. Its function is as follows. Catalyzes the oxidation of 5,10-methylenetetrahydrofolate to 5,10-methenyltetrahydrofolate and then the hydrolysis of 5,10-methenyltetrahydrofolate to 10-formyltetrahydrofolate. The protein is Bifunctional protein FolD of Dictyoglomus thermophilum (strain ATCC 35947 / DSM 3960 / H-6-12).